A 452-amino-acid chain; its full sequence is Cell division protein FtsZ (452 aa).

Residues 24 to 28, 111 to 113, E142, R146, and D190 each bind GTP; these read GAGSN and GTG.

Belongs to the FtsZ family. Homodimer. Polymerizes to form a dynamic ring structure in a strictly GTP-dependent manner. Interacts directly with several other division proteins.

Its subcellular location is the cytoplasm. In terms of biological role, essential cell division protein that forms a contractile ring structure (Z ring) at the future cell division site. The regulation of the ring assembly controls the timing and the location of cell division. One of the functions of the FtsZ ring is to recruit other cell division proteins to the septum to produce a new cell wall between the dividing cells. Binds GTP and shows GTPase activity. This Rickettsia felis (strain ATCC VR-1525 / URRWXCal2) (Rickettsia azadi) protein is Cell division protein FtsZ.